Consider the following 272-residue polypeptide: Type III pantothenate kinase (272 aa).

Position 6-13 (aspartate 6–valine 13) interacts with ATP. Glycine 109 to arginine 112 serves as a coordination point for substrate. The active-site Proton acceptor is the aspartate 111. Aspartate 131 provides a ligand contact to K(+). Residue serine 134 participates in ATP binding. Threonine 186 is a substrate binding site.

The protein belongs to the type III pantothenate kinase family. Homodimer. NH4(+) serves as cofactor. It depends on K(+) as a cofactor.

It is found in the cytoplasm. The catalysed reaction is (R)-pantothenate + ATP = (R)-4'-phosphopantothenate + ADP + H(+). Its pathway is cofactor biosynthesis; coenzyme A biosynthesis; CoA from (R)-pantothenate: step 1/5. Functionally, catalyzes the phosphorylation of pantothenate (Pan), the first step in CoA biosynthesis. The chain is Type III pantothenate kinase from Mycobacterium marinum (strain ATCC BAA-535 / M).